Consider the following 77-residue polypeptide: Large ribosomal subunit protein uL29 (77 aa).

The protein belongs to the universal ribosomal protein uL29 family.

The polypeptide is Large ribosomal subunit protein uL29 (Corynebacterium urealyticum (strain ATCC 43042 / DSM 7109)).